We begin with the raw amino-acid sequence, 313 residues long: tRNA dimethylallyltransferase (313 aa).

Glycine 11–threonine 18 is a binding site for ATP. Threonine 13–threonine 18 is a binding site for substrate. 3 interaction with substrate tRNA regions span residues aspartate 36–leucine 39, glutamine 160–arginine 164, and arginine 243–arginine 248.

The protein belongs to the IPP transferase family. In terms of assembly, monomer. Mg(2+) is required as a cofactor.

It carries out the reaction adenosine(37) in tRNA + dimethylallyl diphosphate = N(6)-dimethylallyladenosine(37) in tRNA + diphosphate. Catalyzes the transfer of a dimethylallyl group onto the adenine at position 37 in tRNAs that read codons beginning with uridine, leading to the formation of N6-(dimethylallyl)adenosine (i(6)A). The polypeptide is tRNA dimethylallyltransferase (Neisseria gonorrhoeae (strain NCCP11945)).